The chain runs to 149 residues: D-aminoacyl-tRNA deacylase (149 aa).

The Gly-cisPro motif, important for rejection of L-amino acids signature appears at 137 to 138 (GP).

It belongs to the DTD family. Homodimer.

Its subcellular location is the cytoplasm. It carries out the reaction glycyl-tRNA(Ala) + H2O = tRNA(Ala) + glycine + H(+). The enzyme catalyses a D-aminoacyl-tRNA + H2O = a tRNA + a D-alpha-amino acid + H(+). In terms of biological role, an aminoacyl-tRNA editing enzyme that deacylates mischarged D-aminoacyl-tRNAs. Also deacylates mischarged glycyl-tRNA(Ala), protecting cells against glycine mischarging by AlaRS. Acts via tRNA-based rather than protein-based catalysis; rejects L-amino acids rather than detecting D-amino acids in the active site. By recycling D-aminoacyl-tRNA to D-amino acids and free tRNA molecules, this enzyme counteracts the toxicity associated with the formation of D-aminoacyl-tRNA entities in vivo and helps enforce protein L-homochirality. The polypeptide is D-aminoacyl-tRNA deacylase (Leuconostoc mesenteroides subsp. mesenteroides (strain ATCC 8293 / DSM 20343 / BCRC 11652 / CCM 1803 / JCM 6124 / NCDO 523 / NBRC 100496 / NCIMB 8023 / NCTC 12954 / NRRL B-1118 / 37Y)).